Consider the following 428-residue polypeptide: Dihydroorotase (428 aa).

Zn(2+) is bound by residues H59 and H61. Residues 61–63 and N93 contribute to the substrate site; that span reads HLR. Zn(2+) is bound by residues D151, H178, and H231. Substrate is bound at residue N277. Zn(2+) is bound at residue D304. D304 is a catalytic residue. Substrate-binding positions include H308 and 322-323; that span reads FG.

Belongs to the metallo-dependent hydrolases superfamily. DHOase family. Class I DHOase subfamily. Zn(2+) serves as cofactor.

The enzyme catalyses (S)-dihydroorotate + H2O = N-carbamoyl-L-aspartate + H(+). It functions in the pathway pyrimidine metabolism; UMP biosynthesis via de novo pathway; (S)-dihydroorotate from bicarbonate: step 3/3. Catalyzes the reversible cyclization of carbamoyl aspartate to dihydroorotate. In Bacillus cytotoxicus (strain DSM 22905 / CIP 110041 / 391-98 / NVH 391-98), this protein is Dihydroorotase.